Consider the following 185-residue polypeptide: MARLMSSALIRGLVRSSCSPTVAAVAQPTIHQFRNYSSGLGGDSTATGDSSSTRVAADPDTHQDFQPTTKSSNMSFDDIVSQDIKENPVLIYMKGYPDAPRCGFSALAVRVLKQYDVPISARDILGDLKLKESVKAHTNWPTFPQIFIKGEFVGGSDIILDMHQKGQLKDVLGDIAQKREQNESS.

The N-terminal 36 residues, 1-36 (MARLMSSALIRGLVRSSCSPTVAAVAQPTIHQFRNY), are a transit peptide targeting the mitochondrion. The tract at residues 37–74 (SSGLGGDSTATGDSSSTRVAADPDTHQDFQPTTKSSNM) is disordered. Over residues 43-53 (DSTATGDSSST) the composition is skewed to low complexity. The segment covering 64–74 (DFQPTTKSSNM) has biased composition (polar residues). A Glutaredoxin domain is found at 77–179 (DDIVSQDIKE…DVLGDIAQKR (103 aa)). Position 94 (Lys94) interacts with glutathione. Cys102 contacts [2Fe-2S] cluster. Glutathione is bound by residues Lys131, Phe143, and 156–157 (SD).

The protein belongs to the glutaredoxin family. CGFS subfamily.

Its subcellular location is the mitochondrion. May only reduce GSH-thiol disulfides, but not protein disulfides. The sequence is that of Monothiol glutaredoxin-S4, mitochondrial (GRXS4) from Oryza sativa subsp. japonica (Rice).